Here is a 764-residue protein sequence, read N- to C-terminus: 1,4-alpha-glucan branching enzyme GlgB (764 aa).

D434 acts as the Nucleophile in catalysis. The active-site Proton donor is E487.

The protein belongs to the glycosyl hydrolase 13 family. GlgB subfamily. Monomer.

It catalyses the reaction Transfers a segment of a (1-&gt;4)-alpha-D-glucan chain to a primary hydroxy group in a similar glucan chain.. The protein operates within glycan biosynthesis; glycogen biosynthesis. Its function is as follows. Catalyzes the formation of the alpha-1,6-glucosidic linkages in glycogen by scission of a 1,4-alpha-linked oligosaccharide from growing alpha-1,4-glucan chains and the subsequent attachment of the oligosaccharide to the alpha-1,6 position. The chain is 1,4-alpha-glucan branching enzyme GlgB from Trichormus variabilis (strain ATCC 29413 / PCC 7937) (Anabaena variabilis).